Consider the following 183-residue polypeptide: Globin-like protein 26 (183 aa).

The tract at residues 1-25 (MGSSTSTPAPPPKKNKPEGRKADNQ) is disordered. Gly2 carries the N-myristoyl glycine lipid modification. A Nuclear localization signal motif is present at residues 12 to 18 (PKKNKPE). A Globin domain is found at 26–166 (ILNSYQKSIV…VVDQLRFGYS (141 aa)). Residues His77 and His109 each contribute to the heme site.

This sequence belongs to the globin family. Homodimer. Occurs in an equilibrium of monomeric and dimeric forms in solution. As to expression, detected in the head mesodermal cell. In the tail region, detected in the stomatointestinal and anal depressor muscle cells.

The protein localises to the cytoplasm. Its subcellular location is the nucleus lamina. The protein resides in the cell membrane. Functionally, plays a role in electron transport. Utilizes the bis-histidyl hexacoordinated complex with iron to transfer electrons to cytochrome c and molecular oxygen. Plays a regulatory role in the periodicity of the defecation cycle under oxidative stress conditions. Not involved in imparting protection against general conditions of oxidative stress. May participate in redox reactions under anaerobic conditions. The protein is Globin-like protein 26 of Caenorhabditis elegans.